Consider the following 95-residue polypeptide: Integration host factor subunit beta (95 aa).

This sequence belongs to the bacterial histone-like protein family. In terms of assembly, heterodimer of an alpha and a beta chain.

Its function is as follows. This protein is one of the two subunits of integration host factor, a specific DNA-binding protein that functions in genetic recombination as well as in transcriptional and translational control. The sequence is that of Integration host factor subunit beta from Klebsiella pneumoniae (strain 342).